Consider the following 235-residue polypeptide: Hydroxyacylglutathione hydrolase (235 aa).

The Zn(2+) site is built by H53, H55, D57, H58, H109, D127, and H165.

The protein belongs to the metallo-beta-lactamase superfamily. Glyoxalase II family. As to quaternary structure, monomer. Requires Zn(2+) as cofactor.

The catalysed reaction is an S-(2-hydroxyacyl)glutathione + H2O = a 2-hydroxy carboxylate + glutathione + H(+). The protein operates within secondary metabolite metabolism; methylglyoxal degradation; (R)-lactate from methylglyoxal: step 2/2. Its function is as follows. Thiolesterase that catalyzes the hydrolysis of S-D-lactoyl-glutathione to form glutathione and D-lactic acid. The chain is Hydroxyacylglutathione hydrolase from Haemophilus ducreyi (strain 35000HP / ATCC 700724).